The chain runs to 266 residues: Large ribosomal subunit protein eL8 (266 aa).

Residues Lys11, Lys20, and Lys21 each participate in a glycyl lysine isopeptide (Lys-Gly) (interchain with G-Cter in SUMO2) cross-link. The residue at position 34 (Lys34) is an N6-acetyllysine. Lys48 is covalently cross-linked (Glycyl lysine isopeptide (Lys-Gly) (interchain with G-Cter in SUMO2)). The residue at position 97 (Lys97) is an N6-acetyllysine; alternate. Lys97 is covalently cross-linked (Glycyl lysine isopeptide (Lys-Gly) (interchain with G-Cter in SUMO2); alternate). Lys125 is covalently cross-linked (Glycyl lysine isopeptide (Lys-Gly) (interchain with G-Cter in SUMO2)). Lys217 bears the N6-acetyllysine mark. Lys245 is covalently cross-linked (Glycyl lysine isopeptide (Lys-Gly) (interchain with G-Cter in SUMO2)).

It belongs to the eukaryotic ribosomal protein eL8 family. As to quaternary structure, component of the large ribosomal subunit. Interacts with CRY1. Interacts with DICER1, AGO2, TARBP2, MOV10 and EIF6; they form a large RNA-induced silencing complex (RISC).

The protein localises to the cytoplasm. Functionally, component of the large ribosomal subunit. The ribosome is a large ribonucleoprotein complex responsible for the synthesis of proteins in the cell. This Mus musculus (Mouse) protein is Large ribosomal subunit protein eL8 (Rpl7a).